The sequence spans 326 residues: Aspartate carbamoyltransferase catalytic subunit (326 aa).

Residues R55 and T56 each contribute to the carbamoyl phosphate site. Residue K83 participates in L-aspartate binding. Carbamoyl phosphate is bound by residues R105, H135, and Q138. The L-aspartate site is built by R176 and R230. The carbamoyl phosphate site is built by G271 and P272.

The protein belongs to the aspartate/ornithine carbamoyltransferase superfamily. ATCase family. As to quaternary structure, heterododecamer (2C3:3R2) of six catalytic PyrB chains organized as two trimers (C3), and six regulatory PyrI chains organized as three dimers (R2).

The enzyme catalyses carbamoyl phosphate + L-aspartate = N-carbamoyl-L-aspartate + phosphate + H(+). Its pathway is pyrimidine metabolism; UMP biosynthesis via de novo pathway; (S)-dihydroorotate from bicarbonate: step 2/3. Functionally, catalyzes the condensation of carbamoyl phosphate and aspartate to form carbamoyl aspartate and inorganic phosphate, the committed step in the de novo pyrimidine nucleotide biosynthesis pathway. The chain is Aspartate carbamoyltransferase catalytic subunit from Streptomyces coelicolor (strain ATCC BAA-471 / A3(2) / M145).